Here is a 248-residue protein sequence, read N- to C-terminus: Ribosomal RNA small subunit methyltransferase J (248 aa).

S-adenosyl-L-methionine contacts are provided by residues 101 to 102 (RD), 117 to 118 (ER), 153 to 154 (SS), and Asp-171.

Belongs to the methyltransferase superfamily. RsmJ family.

Its subcellular location is the cytoplasm. It carries out the reaction guanosine(1516) in 16S rRNA + S-adenosyl-L-methionine = N(2)-methylguanosine(1516) in 16S rRNA + S-adenosyl-L-homocysteine + H(+). Functionally, specifically methylates the guanosine in position 1516 of 16S rRNA. The protein is Ribosomal RNA small subunit methyltransferase J of Proteus mirabilis (strain HI4320).